A 191-amino-acid polypeptide reads, in one-letter code: MHDSNNVEKDITPSELPANPGCLHSKEHSIKATLIWRLFFLIMFLTIIVCGMVAALSAIRANCHQEPSVCLQAACPESWIGFQRKCFYFSDDTKNWTSSQRFCDSQDADLAQVESFQELNFLLRYKGPSDHWIGLSREQGQPWKWINGTEWTRQFPILGAGECAYLNDKGASSARHYTERKWICSKSDIHV.

Residues 1–38 (MHDSNNVEKDITPSELPANPGCLHSKEHSIKATLIWRL) are Cytoplasmic-facing. Residues 39-59 (FFLIMFLTIIVCGMVAALSAI) form a helical; Signal-anchor for type II membrane protein membrane-spanning segment. Over 60 to 191 (RANCHQEPSV…WICSKSDIHV (132 aa)) the chain is Extracellular. Cysteine 75 and cysteine 86 are disulfide-bonded. Positions 82 to 185 (FQRKCFYFSD…HYTERKWICS (104 aa)) constitute a C-type lectin domain. 2 N-linked (GlcNAc...) asparagine glycosylation sites follow: asparagine 95 and asparagine 147. Cysteine 103 and cysteine 184 are disulfide-bonded.

As to quaternary structure, homodimer; disulfide-linked. Post-translationally, N-glycosylated. As to expression, detected in peripheral blood leukocytes, osteoblasts, lymph node, thymus and spleen. Isoform 1, isoform 2 and isoform 4 are expressed in T- and B-lymphocytes, and at lower levels in NK cells. They are also expressed in B-cell lines and LPS-matured monocyte-derived dendritic cells.

Its subcellular location is the cell membrane. The protein localises to the endoplasmic reticulum. Functionally, receptor for KLRB1 that protects target cells against natural killer cell-mediated lysis. Inhibits osteoclast formation. Inhibits bone resorption. Modulates the release of interferon-gamma. Binds high molecular weight sulfated glycosaminoglycans. The sequence is that of C-type lectin domain family 2 member D (CLEC2D) from Homo sapiens (Human).